A 451-amino-acid chain; its full sequence is Enolase (451 aa).

Residue Q167 coordinates (2R)-2-phosphoglycerate. E209 serves as the catalytic Proton donor. Residues D250, E307, and D334 each contribute to the Mg(2+) site. (2R)-2-phosphoglycerate is bound by residues K359, R388, S389, and K410. The active-site Proton acceptor is the K359.

Belongs to the enolase family. Mg(2+) serves as cofactor.

The protein localises to the cytoplasm. It is found in the secreted. It localises to the cell surface. It carries out the reaction (2R)-2-phosphoglycerate = phosphoenolpyruvate + H2O. It functions in the pathway carbohydrate degradation; glycolysis; pyruvate from D-glyceraldehyde 3-phosphate: step 4/5. In terms of biological role, catalyzes the reversible conversion of 2-phosphoglycerate (2-PG) into phosphoenolpyruvate (PEP). It is essential for the degradation of carbohydrates via glycolysis. In Mesomycoplasma hyopneumoniae (strain J / ATCC 25934 / NCTC 10110) (Mycoplasma hyopneumoniae), this protein is Enolase.